The primary structure comprises 100 residues: Integration host factor subunit alpha (100 aa).

Belongs to the bacterial histone-like protein family. Heterodimer of an alpha and a beta chain.

In terms of biological role, this protein is one of the two subunits of integration host factor, a specific DNA-binding protein that functions in genetic recombination as well as in transcriptional and translational control. This is Integration host factor subunit alpha (ihfA) from Zymomonas mobilis subsp. mobilis (strain ATCC 31821 / ZM4 / CP4).